The primary structure comprises 215 residues: Secretory component protein psh3 (215 aa).

At 1–21 (MAKRSIFRFADEKGLKVAARY) the chain is on the cytoplasmic side. A helical transmembrane segment spans residues 22–42 (GVLMSTSFIFALLFHSSVADV). At 43–67 (NTLWSPGPESAFDAAETYYTLVAGS) the chain is on the extracellular side. The chain crosses the membrane as a helical span at residues 68–88 (HFIVKYTVYTIMGLNMIFHLI). The Cytoplasmic portion of the chain corresponds to 89–105 (QATGAKGDDKLFFYSST). A helical membrane pass occupies residues 106-126 (LLYLTALILFIVNVAPSMLVV). Topologically, residues 127–147 (KLQNYVQFPRNMHLSVLAASH) are extracellular. Residues 148-168 (VLVEFLLAGVILIQLGYVFGY) traverse the membrane as a helical segment. Topologically, residues 169 to 215 (HVQSIQQREYAEDMREQELAEKAKLESESATTQSVETVSTESVSKRK) are cytoplasmic. The segment at 190–215 (KAKLESESATTQSVETVSTESVSKRK) is disordered. The segment covering 196–215 (ESATTQSVETVSTESVSKRK) has biased composition (low complexity).

To yeast SHR3. Monomer.

The protein resides in the endoplasmic reticulum membrane. Involved in amino acid permease processing and required for the efficient translocation of structurally related amino acid permeases from the endoplasmic reticulum to the plasma membrane. This is Secretory component protein psh3 (psh3) from Schizosaccharomyces pombe (strain 972 / ATCC 24843) (Fission yeast).